Here is a 343-residue protein sequence, read N- to C-terminus: L-rhamnose-proton symporter (343 aa).

The next 10 helical transmembrane spans lie at 4–24 (AIIL…CFYA), 38–58 (WSIG…YLLL), 68–88 (FSIA…IGNI), 101–121 (MGIG…TPIL), 137–157 (TLLG…AGLL), 175–195 (LILA…MDAA), 207–227 (INSL…GAII), 254–274 (LLIT…LQFF), 289–309 (MSWM…GLLL), and 320–340 (VAVL…VGLG).

It belongs to the L-rhamnose transporter (TC 2.A.7.6) family.

It is found in the cell inner membrane. The enzyme catalyses L-rhamnopyranose(in) + H(+)(in) = L-rhamnopyranose(out) + H(+)(out). Its function is as follows. Uptake of L-rhamnose across the cytoplasmic membrane with the concomitant transport of protons into the cell (symport system). The sequence is that of L-rhamnose-proton symporter from Yersinia pestis bv. Antiqua (strain Antiqua).